We begin with the raw amino-acid sequence, 37 residues long: Large ribosomal subunit protein bL36 (37 aa).

This sequence belongs to the bacterial ribosomal protein bL36 family.

In Bordetella bronchiseptica (strain ATCC BAA-588 / NCTC 13252 / RB50) (Alcaligenes bronchisepticus), this protein is Large ribosomal subunit protein bL36.